A 108-amino-acid chain; its full sequence is uncharacterized protein (108 aa).

The segment covering 1 to 12 has biased composition (polar residues); that stretch reads MSNQQKQLQLPS. A disordered region spans residues 1–22; sequence MSNQQKQLQLPSASIKKPKEKQ.

This is an uncharacterized protein from Dictyostelium discoideum (Social amoeba).